A 223-amino-acid polypeptide reads, in one-letter code: Cytidylate kinase (223 aa).

ATP is bound at residue 12-20; sequence GPSGVGKGT.

This sequence belongs to the cytidylate kinase family. Type 1 subfamily.

The protein resides in the cytoplasm. It carries out the reaction CMP + ATP = CDP + ADP. It catalyses the reaction dCMP + ATP = dCDP + ADP. This chain is Cytidylate kinase, found in Xylella fastidiosa (strain 9a5c).